A 234-amino-acid chain; its full sequence is Large ribosomal subunit protein uL1 (234 aa).

The protein belongs to the universal ribosomal protein uL1 family. As to quaternary structure, part of the 50S ribosomal subunit.

Functionally, binds directly to 23S rRNA. The L1 stalk is quite mobile in the ribosome, and is involved in E site tRNA release. Its function is as follows. Protein L1 is also a translational repressor protein, it controls the translation of the L11 operon by binding to its mRNA. In Serratia marcescens, this protein is Large ribosomal subunit protein uL1.